The following is a 232-amino-acid chain: Lipoprotein-releasing system ATP-binding protein LolD 1 (232 aa).

The region spanning 11 to 231 (VYLHDVKRQY…SIQDGLVVEL (221 aa)) is the ABC transporter domain. 47-54 (APSGAGKS) contacts ATP.

It belongs to the ABC transporter superfamily. Lipoprotein translocase (TC 3.A.1.125) family. The complex is composed of two ATP-binding proteins (LolD) and two transmembrane proteins (LolC and LolE).

It localises to the cell inner membrane. Part of the ABC transporter complex LolCDE involved in the translocation of mature outer membrane-directed lipoproteins, from the inner membrane to the periplasmic chaperone, LolA. Responsible for the formation of the LolA-lipoprotein complex in an ATP-dependent manner. The chain is Lipoprotein-releasing system ATP-binding protein LolD 1 from Rhodopseudomonas palustris (strain BisB18).